The following is a 247-amino-acid chain: Tyrosine recombinase XerD-like (247 aa).

The region spanning 1 to 72 is the Core-binding (CB) domain; it reads MIKHIEAFLA…TVNQFLHYLY (72 aa). The Tyr recombinase domain occupies 91 to 247; the sequence is STKVPFTYQL…PITLEKYYRL (157 aa). The active site involves Arg-212. The active-site O-(3'-phospho-DNA)-tyrosine intermediate is the Tyr-244.

The protein belongs to the 'phage' integrase family. XerD-like subfamily.

It is found in the cytoplasm. Putative tyrosine recombinase. Not involved in the cutting and rejoining of the recombining DNA molecules on dif(SL) site. The chain is Tyrosine recombinase XerD-like from Streptococcus uberis (strain ATCC BAA-854 / 0140J).